The primary structure comprises 477 residues: MTRSVTRPSYDRKALTPGIVHIGVGNFHRAHQAVYLDDLFALGEGHDWAILGAGVRPTDARMREALAAQDNLSTVIELDPAGHRARQVGAMVGFLPVEADNAALIEAMSDPRIRIVSLTVTEGGYYVDASGAFDPTHPDIVADAAHPARPATAFGAILAALRARRDAGVTPFTVMSCDNLPGNGHVTRNAVVGLAELYDAELAGWVKAQVAFPNGMVDRITPATGPHERELAQGFGLADPVPVTCEPFRQWVIEDHFPAGRPALEKVGVTFTPHVHAYEAMKIRILNGGHAVIAYPSALMDIQLVHAAMAHPLIAAFLHKVEVEEILPHVPPVPDTSIPDYLTLIESRFSNPEIADTTRRLCLDGSNRQPKFIVPSLRDNLAAGTVPKGLVLLSALWCRYCFGTTDSGVVVEPNDPNWTALQDRARRAKETPAEWLAMTEVYGDLAQNDLLAAEFAAALEAVWRDGAEAVLRRFLAA.

19-30 is a binding site for NAD(+); sequence IVHIGVGNFHRA.

It belongs to the mannitol dehydrogenase family. As to quaternary structure, monomer.

It carries out the reaction D-mannitol + NAD(+) = D-fructose + NADH + H(+). The polypeptide is Mannitol 2-dehydrogenase (mtlK) (Cereibacter sphaeroides (Rhodobacter sphaeroides)).